We begin with the raw amino-acid sequence, 71 residues long: DNA-directed RNA polymerase subunit epsilon (71 aa).

This sequence belongs to the RNA polymerase subunit epsilon family. As to quaternary structure, RNAP is composed of a core of 2 alpha, a beta and a beta' subunit. The core is associated with a delta subunit, and at least one of epsilon or omega. When a sigma factor is associated with the core the holoenzyme is formed, which can initiate transcription.

The enzyme catalyses RNA(n) + a ribonucleoside 5'-triphosphate = RNA(n+1) + diphosphate. Its function is as follows. A non-essential component of RNA polymerase (RNAP). The protein is DNA-directed RNA polymerase subunit epsilon of Staphylococcus saprophyticus subsp. saprophyticus (strain ATCC 15305 / DSM 20229 / NCIMB 8711 / NCTC 7292 / S-41).